The chain runs to 194 residues: NAD(P)H:quinone oxidoreductase (194 aa).

This sequence belongs to the SsuE family. Homotetramer. FMN is required as a cofactor.

It catalyses the reaction a quinone + NADH + H(+) = a quinol + NAD(+). It carries out the reaction a quinone + NADPH + H(+) = a quinol + NADP(+). In terms of biological role, the enzyme apparently serves as a quinone reductase in connection with conjugation reactions of hydroquinones involved in detoxification pathways. This Solanum tuberosum (Potato) protein is NAD(P)H:quinone oxidoreductase.